The primary structure comprises 381 residues: Cytochrome b (381 aa).

A run of 4 helical transmembrane segments spans residues 34-54 (FGSH…FLAM), 78-99 (WLIR…YLHI), 114-134 (WNIG…GYVL), and 179-199 (FFAF…IHLL). Residues His84 and His98 each contribute to the heme b site. The heme b site is built by His183 and His197. Position 202 (His202) interacts with a ubiquinone. 4 consecutive transmembrane segments (helical) span residues 227–247 (YKDL…ALFM), 289–309 (LGGV…PLLH), 321–341 (MTQI…WIGG), and 348–368 (FIMV…IIMP).

This sequence belongs to the cytochrome b family. As to quaternary structure, the cytochrome bc1 complex contains 3 respiratory subunits (MT-CYB, CYC1 and UQCRFS1), 2 core proteins (UQCRC1 and UQCRC2) and probably 6 low-molecular weight proteins. Requires heme b as cofactor.

The protein resides in the mitochondrion inner membrane. Its function is as follows. Component of the ubiquinol-cytochrome c reductase complex (complex III or cytochrome b-c1 complex) that is part of the mitochondrial respiratory chain. The b-c1 complex mediates electron transfer from ubiquinol to cytochrome c. Contributes to the generation of a proton gradient across the mitochondrial membrane that is then used for ATP synthesis. The polypeptide is Cytochrome b (mt-cyb) (Carcharhinus porosus (Smalltail shark)).